A 388-amino-acid polypeptide reads, in one-letter code: Succinyl-diaminopimelate desuccinylase (388 aa).

His71 is a Zn(2+) binding site. The active site involves Asp73. Asp104 contacts Zn(2+). Glu143 serves as the catalytic Proton acceptor. Zn(2+) is bound by residues Glu144, Glu172, and His361.

It belongs to the peptidase M20A family. DapE subfamily. In terms of assembly, homodimer. It depends on Zn(2+) as a cofactor. The cofactor is Co(2+).

It catalyses the reaction N-succinyl-(2S,6S)-2,6-diaminopimelate + H2O = (2S,6S)-2,6-diaminopimelate + succinate. It participates in amino-acid biosynthesis; L-lysine biosynthesis via DAP pathway; LL-2,6-diaminopimelate from (S)-tetrahydrodipicolinate (succinylase route): step 3/3. In terms of biological role, catalyzes the hydrolysis of N-succinyl-L,L-diaminopimelic acid (SDAP), forming succinate and LL-2,6-diaminopimelate (DAP), an intermediate involved in the bacterial biosynthesis of lysine and meso-diaminopimelic acid, an essential component of bacterial cell walls. This chain is Succinyl-diaminopimelate desuccinylase, found in Bradyrhizobium diazoefficiens (strain JCM 10833 / BCRC 13528 / IAM 13628 / NBRC 14792 / USDA 110).